The chain runs to 382 residues: Secreted RxLR effector protein 118 (382 aa).

The N-terminal stretch at 1 to 21 (MRGAYYVTIALLVVASSQISA) is a signal peptide. Residues 48–65 (RSLRGSRDVSNDVAIEER) carry the RxLR-dEER motif. Positions 308–382 (MNKASTSKGK…AVTSLSSISN (75 aa)) are disordered. The segment covering 310–323 (KASTSKGKSSVFTR) has biased composition (polar residues).

Belongs to the RxLR effector family.

It localises to the secreted. Its subcellular location is the host nucleus. Its function is as follows. Secreted effector that completely suppresses the host cell death induced by cell death-inducing proteins. The polypeptide is Secreted RxLR effector protein 118 (Plasmopara viticola (Downy mildew of grapevine)).